Consider the following 73-residue polypeptide: Protein RALF-like 10 (73 aa).

The N-terminal stretch at 1–17 (MKALVICLLVIFAAVIA) is a signal peptide. Cystine bridges form between C35–C44 and C64–C70.

Belongs to the plant rapid alkalinization factor (RALF) family. In terms of tissue distribution, expressed in flowers.

The protein localises to the secreted. Cell signaling peptide that may regulate plant stress, growth, and development. Mediates a rapid alkalinization of extracellular space by mediating a transient increase in the cytoplasmic Ca(2+) concentration leading to a calcium-dependent signaling events through a cell surface receptor and a concomitant activation of some intracellular mitogen-activated protein kinases. The protein is Protein RALF-like 10 (RALFL10) of Arabidopsis thaliana (Mouse-ear cress).